The chain runs to 403 residues: MSSYLFTSESVSEGHPDKVADQISDAVLDAILVQDPRARVACETMVKTGVAIIAGEITTSAWVDLEALTRKVIVDIGYNSSDVGFDGATCGVLNLIGKQSPDINQGVDRKKAEEQGAGDQGLMFGYATNETDSYMPAAIHISHRLVEQQAKIRKKSNSPLPWLRPDAKAQITLRYEDGVASAIDAVVLSTQHDPGIKQKDLVEAVREEILKPVLPSKWLHKGTKFHINPTGKFVIGGPVGDCGLTGRKIIVDTYGGSARHGGGAFSGKDPSKVDRSASYAVRYVAKNVVAAGLADRCEVQVSYAIGVAEPISISVTTFGTGKVPDDKIEKLIRQHFDLRPYGIIKMLDLIHPIYQPSASYGHFGRKPREFAYTNSNGGRVVATAFSWEKIDKAEVLRADAKLK.

H15 is an ATP binding site. D17 contributes to the Mg(2+) binding site. E43 provides a ligand contact to K(+). Residues E56 and Q99 each contribute to the L-methionine site. The segment at 99–109 (QSPDINQGVDR) is flexible loop. ATP contacts are provided by residues 166-168 (DAK), 232-233 (KF), D241, 247-248 (RK), A264, and K268. L-methionine is bound at residue D241. K272 contacts L-methionine.

The protein belongs to the AdoMet synthase family. As to quaternary structure, homotetramer; dimer of dimers. The cofactor is Mg(2+). Requires K(+) as cofactor.

It is found in the cytoplasm. It catalyses the reaction L-methionine + ATP + H2O = S-adenosyl-L-methionine + phosphate + diphosphate. The protein operates within amino-acid biosynthesis; S-adenosyl-L-methionine biosynthesis; S-adenosyl-L-methionine from L-methionine: step 1/1. In terms of biological role, catalyzes the formation of S-adenosylmethionine (AdoMet) from methionine and ATP. The overall synthetic reaction is composed of two sequential steps, AdoMet formation and the subsequent tripolyphosphate hydrolysis which occurs prior to release of AdoMet from the enzyme. In Xylella fastidiosa (strain M12), this protein is S-adenosylmethionine synthase.